Consider the following 235-residue polypeptide: Large ribosomal subunit protein uL1 (235 aa).

It belongs to the universal ribosomal protein uL1 family. As to quaternary structure, part of the 50S ribosomal subunit.

In terms of biological role, binds directly to 23S rRNA. The L1 stalk is quite mobile in the ribosome, and is involved in E site tRNA release. Protein L1 is also a translational repressor protein, it controls the translation of the L11 operon by binding to its mRNA. The chain is Large ribosomal subunit protein uL1 from Thermobifida fusca (strain YX).